We begin with the raw amino-acid sequence, 508 residues long: Cobyric acid synthase (508 aa).

The GATase cobBQ-type domain occupies 249–451 (EVDVAIINLP…IHGIFENSLF (203 aa)). The active-site Nucleophile is C330. Residue H443 is part of the active site.

This sequence belongs to the CobB/CobQ family. CobQ subfamily.

It participates in cofactor biosynthesis; adenosylcobalamin biosynthesis. Its function is as follows. Catalyzes amidations at positions B, D, E, and G on adenosylcobyrinic A,C-diamide. NH(2) groups are provided by glutamine, and one molecule of ATP is hydrogenolyzed for each amidation. The chain is Cobyric acid synthase from Caldanaerobacter subterraneus subsp. tengcongensis (strain DSM 15242 / JCM 11007 / NBRC 100824 / MB4) (Thermoanaerobacter tengcongensis).